The following is a 492-amino-acid chain: G2/mitotic-specific cyclin CLB2 (492 aa).

The interval 1–176 (MPQVTKTNNE…QPEVGERSQS (176 aa)) is disordered. Polar residues predominate over residues 23-33 (QESISTIKNTT). Low complexity predominate over residues 34–58 (ISNSQHKQQTQQQISSPPQVSVTSS). A compositionally biased stretch (polar residues) spans 59–83 (EGVSHVNTRQYLGDVSNQYITNAKP). Over residues 111-135 (ASDNNNNGSTSSSSNSSNNNNNDAN) the composition is skewed to low complexity. The Cyclin N-terminal domain occupies 208–334 (EIFSYYYELE…MLTILNFDLN (127 aa)).

The protein belongs to the cyclin family. Cyclin AB subfamily.

Functionally, 2/mitotic-specific cyclin essential for the control of the cell cycle at the G2/M (mitosis) transition. G2/M cyclins accumulate steadily during G2 and are abruptly destroyed at mitosis. Degradation is necessary for the cell to exit from mitosis. Plays a role in morphogenesis by negatively regulating polarized growth. Through binding to CDC28 regulates cytokinesis, partly by phosphorylation of the actomyosin ring component IQG1. Also involved in the phosphorylation of CDC6 and CDC54. This chain is G2/mitotic-specific cyclin CLB2 (CLB2), found in Candida albicans (strain SC5314 / ATCC MYA-2876) (Yeast).